Here is a 416-residue protein sequence, read N- to C-terminus: Protein-lysine N-trimethyltransferase SMYD5 (416 aa).

Residues 21–351 (GSVEVRYVDS…PGEEICISYL (331 aa)) form the SET domain. The segment at 98-136 (PELCSVRKDLHQNCPHCQVMYCSAECRLAAAEQYHQILC) adopts an MYND-type zinc-finger fold. Tyr350 contributes to the S-adenosyl-L-methionine binding site. The disordered stretch occupies residues 383–416 (EADDPNVTSEEEEEEDEEEGEPEDAELGDEMTDV).

The protein belongs to the class V-like SAM-binding methyltransferase superfamily. In terms of assembly, interacts with the N-CoR complex. Interacts with EHMT2 and CBX5. Post-translationally, ubiquitinated and degradaed by the proteasome in response to mild hypothermia (32 degrees Celsius), relieving repression of the SP1 gene.

The protein resides in the cytoplasm. It carries out the reaction L-lysyl-[protein] + 3 S-adenosyl-L-methionine = N(6),N(6),N(6)-trimethyl-L-lysyl-[protein] + 3 S-adenosyl-L-homocysteine + 3 H(+). The enzyme catalyses L-lysyl(20)-[histone H4] + 3 S-adenosyl-L-methionine = N(6),N(6),N(6)-trimethyl-L-lysyl(20)-[histone H4] + 3 S-adenosyl-L-homocysteine + 3 H(+). The catalysed reaction is L-lysyl(36)-[histone H3] + 3 S-adenosyl-L-methionine = N(6),N(6),N(6)-trimethyl-L-lysyl(36)-[histone H3] + 3 S-adenosyl-L-homocysteine + 3 H(+). Protein-lysine N-trimethyltransferase that specifically catalyzes trimethylation of 'Lys-22' of the RPL40/eL40 subunit of the 60S ribosome, thereby promoting translation elongation and protein synthesis. May also act as a histone methyltransferase in the context of histone octamers, but not on nucleosome substrates: trimethylates 'Lys-36' of histone H3 and 'Lys-20' of histone H4 to form H3K36me3 and H4K20me3, respectively. The histone methyltransferase activity, which is independent of its SET domain, is however unsure in vivo. In association with the NCoR corepressor complex, involved in the repression of toll-like receptor 4 (TLR4)-target inflammatory genes in macrophages, possibly by catalyzing the formation of H4K20me3 at the gene promoters. Plays an important role in embryonic stem (ES) cell self-renewal and differentiation. Maintains genome stability of ES cells during differentiation through regulation of heterochromatin formation and repression of endogenous repetitive DNA elements by promoting H4K20me3 marks. Acts as a regulator of the hypothermia response: its degradation in response to mild hypothermia relieves the formation of H3K36me3 at gene promoters, allowing expression of the neuroprotective gene SP1. The protein is Protein-lysine N-trimethyltransferase SMYD5 of Mus musculus (Mouse).